The chain runs to 589 residues: ATP-dependent lipid A-core flippase (589 aa).

A run of 5 helical transmembrane segments spans residues 29–49, 70–90, 157–177, 261–281, and 283–303; these read LLLVAALIAALIEAAGTTGFL, WLPVQIILLFVIRGAAGYITD, VIGALALMLWHSWQVTLTILV, MIGAIGLSALLFVAGAQALAG, and LTAGDFVVLMTSMLTIIPGLK. The 283-residue stretch at 32 to 314 folds into the ABC transmembrane type-1 domain; it reads VAALIAALIE…LTNVQNMVQR (283 aa). Residues 346–582 enclose the ABC transporter domain; it reads IEFRDVTARY…GGLYSHLHGM (237 aa). 380-387 lines the ATP pocket; the sequence is GRSGSGKS.

The protein belongs to the ABC transporter superfamily. Lipid exporter (TC 3.A.1.106) family. In terms of assembly, homodimer.

The protein localises to the cell inner membrane. The catalysed reaction is ATP + H2O + lipid A-core oligosaccharideSide 1 = ADP + phosphate + lipid A-core oligosaccharideSide 2.. Its function is as follows. Involved in lipopolysaccharide (LPS) biosynthesis. Translocates lipid A-core from the inner to the outer leaflet of the inner membrane. Transmembrane domains (TMD) form a pore in the inner membrane and the ATP-binding domain (NBD) is responsible for energy generation. The sequence is that of ATP-dependent lipid A-core flippase from Xanthomonas campestris pv. campestris (strain 8004).